A 214-amino-acid chain; its full sequence is Charged multivesicular body protein 2b (214 aa).

Positions 16–55 form a coiled coil; it reads EQNKELRGTQRAITRDRAALEKQEKQLEMEIKKMAKAGNK. Positions 178–203 are disordered; that stretch reads MAKAPSAAKGLPSTSASKSSGISDEE. The segment covering 189–199 has biased composition (polar residues); that stretch reads PSTSASKSSGI. An MIT-interacting motif motif is present at residues 202–212; the sequence is EEIERQLKALG.

This sequence belongs to the SNF7 family. As to quaternary structure, probable core component of the endosomal sorting required for transport complex III (ESCRT-III). ESCRT-III components are thought to multimerize to form a flat lattice on the perimeter membrane of the endosome.

It is found in the cytoplasm. Its subcellular location is the cytosol. It localises to the late endosome membrane. In terms of biological role, probable core component of the endosomal sorting required for transport complex III (ESCRT-III) which is involved in multivesicular bodies (MVBs) formation and sorting of endosomal cargo proteins into MVBs. MVBs contain intraluminal vesicles (ILVs) that are generated by invagination and scission from the limiting membrane of the endosome and mostly are delivered to lysosomes enabling degradation of membrane proteins, such as stimulated growth factor receptors, lysosomal enzymes and lipids. In Xenopus tropicalis (Western clawed frog), this protein is Charged multivesicular body protein 2b (chmp2b).